The chain runs to 305 residues: RxLR effector protein PexRD25 (305 aa).

An N-terminal signal peptide occupies residues 1 to 16; it reads MRFLFYMLLACSAVVA. Residues 44–56 carry the RxLR-dEER motif; the sequence is RLLRDRRSVDEER.

The protein belongs to the RxLR effector family.

It is found in the secreted. The protein resides in the host nucleus. The protein localises to the host nucleolus. Functionally, effector that enhances P.infestans colonization of Nicotiana benthamiana leaves. This is RxLR effector protein PexRD25 from Phytophthora infestans (strain T30-4) (Potato late blight agent).